We begin with the raw amino-acid sequence, 215 residues long: FMN-dependent NADH:quinone oxidoreductase (215 aa).

Ser17–Ser19 serves as a coordination point for FMN.

This sequence belongs to the azoreductase type 1 family. Homodimer. Requires FMN as cofactor.

The enzyme catalyses 2 a quinone + NADH + H(+) = 2 a 1,4-benzosemiquinone + NAD(+). It catalyses the reaction N,N-dimethyl-1,4-phenylenediamine + anthranilate + 2 NAD(+) = 2-(4-dimethylaminophenyl)diazenylbenzoate + 2 NADH + 2 H(+). Quinone reductase that provides resistance to thiol-specific stress caused by electrophilic quinones. Its function is as follows. Also exhibits azoreductase activity. Catalyzes the reductive cleavage of the azo bond in aromatic azo compounds to the corresponding amines. This chain is FMN-dependent NADH:quinone oxidoreductase, found in Clostridium botulinum (strain Eklund 17B / Type B).